A 277-amino-acid chain; its full sequence is MELIEKHASFGGWQNVYRHYSQSLKCEMNVGVYLPPKAENEKLPVLYWLSGLTCNEQNFITKSGMQRYAAEHNIIVVAPDTSPRGSHVADADRYDLGQGAGFYLNATQAPWNEHYKMYDYIRNELPNLVMHHFPATARKSISGHSMGGLGALVLALRNPDEYVSVSAFSPIVSPSQVPWGQQAFAAYLGENKDAWLDYDPVSLISQGQRVAEIMVDQGLSDDFYAEQLRTPNLEKICQEMNIKTLIRYHEGYDHSYYFVSSFIGEHIAYHANKLNMR.

Residues serine 145, aspartate 221, and histidine 254 each act as charge relay system in the active site.

Belongs to the esterase D family.

The catalysed reaction is S-formylglutathione + H2O = formate + glutathione + H(+). Serine hydrolase involved in the detoxification of formaldehyde. Hydrolyzes S-formylglutathione to glutathione and formate. This Escherichia coli O1:K1 / APEC protein is S-formylglutathione hydrolase FrmB (frmB).